Reading from the N-terminus, the 188-residue chain is RWD domain-containing protein 4 (188 aa).

Position 2 is an N-acetylserine (S2). The RWD domain occupies 9 to 111 (MELEALRSIY…EYAKDNKEQF (103 aa)). The segment at 132 to 167 (TPNTAPSSKKKDKKEQLSKAQKRKLADKTDHKGELP) is disordered. A compositionally biased stretch (basic and acidic residues) spans 155–166 (KLADKTDHKGEL).

In Homo sapiens (Human), this protein is RWD domain-containing protein 4 (RWDD4).